A 302-amino-acid polypeptide reads, in one-letter code: Oxygen-dependent coproporphyrinogen-III oxidase (302 aa).

Residue Ser-94 coordinates substrate. A divalent metal cation-binding residues include His-98 and His-108. Catalysis depends on His-108, which acts as the Proton donor. Substrate is bound at residue 110 to 112; it reads NVR. 2 residues coordinate a divalent metal cation: His-147 and His-177. An important for dimerization region spans residues 242 to 277; that stretch reads YVEFNLVYDRGTLFGLQTGGRTESILMSMPPLVRWQ. 260 to 262 is a binding site for substrate; sequence GGR.

Belongs to the aerobic coproporphyrinogen-III oxidase family. Homodimer. The cofactor is a divalent metal cation.

The protein localises to the cytoplasm. It carries out the reaction coproporphyrinogen III + O2 + 2 H(+) = protoporphyrinogen IX + 2 CO2 + 2 H2O. It participates in porphyrin-containing compound metabolism; protoporphyrin-IX biosynthesis; protoporphyrinogen-IX from coproporphyrinogen-III (O2 route): step 1/1. Involved in the heme biosynthesis. Catalyzes the aerobic oxidative decarboxylation of propionate groups of rings A and B of coproporphyrinogen-III to yield the vinyl groups in protoporphyrinogen-IX. The protein is Oxygen-dependent coproporphyrinogen-III oxidase of Shewanella oneidensis (strain ATCC 700550 / JCM 31522 / CIP 106686 / LMG 19005 / NCIMB 14063 / MR-1).